Consider the following 532-residue polypeptide: Chromobox protein homolog 2 (532 aa).

Positions 1-66 (MEELSSVGEQ…AFQKKEHEKE (66 aa)) are involved in the interaction with H3C15 and H3C1. Residues 12-70 (FAAECILSKRLRKGKLEYLVKWRGWSSKHNSWEPEENILDPRLLLAFQKKEHEKEVQNR) enclose the Chromo domain. The span at 60–69 (KKEHEKEVQN) shows a compositional bias: basic and acidic residues. The tract at residues 60-204 (KKEHEKEVQN…APASKLPPPL (145 aa)) is disordered. Residues 70-82 (RKRGKRPRGRPRK) are compositionally biased toward basic residues. The a.T hook DNA-binding region spans 75–87 (RPRGRPRKLTAMS). Residues 103-119 (KSKSSSSSSSSTSSSSS) show a composition bias toward low complexity. Basic and acidic residues predominate over residues 128–140 (LDAKRGPRGRETH). Residues Lys146 and Lys153 each participate in a glycyl lysine isopeptide (Lys-Gly) (interchain with G-Cter in SUMO2) cross-link. Residues 163 to 168 (KRGRKP) carry the Nuclear localization signal motif. Arg247 carries the post-translational modification Asymmetric dimethylarginine; alternate. At Arg247 the chain carries Omega-N-methylarginine; alternate. Disordered stretches follow at residues 296 to 348 (KGEL…PAPT) and 379 to 493 (KGVP…SQDW). At Ser302 the chain carries Phosphoserine. Low complexity predominate over residues 464–478 (SSSSDSDPDSASPPS). A compositionally biased stretch (polar residues) spans 479-493 (TGQNPSVSVQTSQDW).

Component of a PRC1-like complex. The composition of the PRC1 complex may differ between the PRC1 complex in pluripotent embryonic stem cells containing RNF2, CBX7 and PCGF2, and the PRC1 complex in differentiating cells containing RNF2, CBX2, CBX4 and BMI1. May interact with H3C15, H3C1 and RNF2. Interacts (via chromodomain) with histone H3K9Me3 and H3K27me3.

The protein resides in the nucleus. Its subcellular location is the chromosome. Functionally, component of a Polycomb group (PcG) multiprotein PRC1-like complex, a complex class required to maintain the transcriptionally repressive state of many genes, including Hox genes, throughout development. PcG PRC1 complex acts via chromatin remodeling and modification of histones; it mediates monoubiquitination of histone H2A 'Lys-119', rendering chromatin heritably changed in its expressibility. Binds to histone H3 trimethylated at 'Lys-9' (H3K9me3) or at 'Lys-27' (H3K27me3). Plays a role in the lineage differentiation of the germ layers in embryonic development. Involved in sexual development, acting as activator of NR5A1 expression. The sequence is that of Chromobox protein homolog 2 (CBX2) from Homo sapiens (Human).